The chain runs to 449 residues: Intestinal acid phosphatase (449 aa).

A signal peptide spans 1–19; the sequence is MVSAISIVAIFALEGFVTT. Over 20-428 the chain is Extracellular; the sequence is YSDGTKDLVF…TDLNKSSSFA (409 aa). The Nucleophile role is filled by His36. Residue Asp321 is the Proton donor of the active site. Residues 429-449 form a helical membrane-spanning segment; sequence TVSMLFIAAILAINNNFLGLF.

It belongs to the histidine acid phosphatase family. As to quaternary structure, homodimer. The N-terminus is blocked. Expressed in the intestine, specifically on the edge of the gut lumen, in the 14 posterior cells of the intestine.

It localises to the membrane. It catalyses the reaction a phosphate monoester + H2O = an alcohol + phosphate. Functionally, acid phosphatase required for normal growth and development. Specifically required for normal gut differentiation. This chain is Intestinal acid phosphatase, found in Caenorhabditis elegans.